The chain runs to 188 residues: Pyridoxal 5'-phosphate synthase subunit PdxT (188 aa).

46–48 (GES) serves as a coordination point for L-glutamine. The active-site Nucleophile is Cys78. L-glutamine-binding positions include Arg105 and 134-135 (IR). Catalysis depends on charge relay system residues His170 and Glu172.

It belongs to the glutaminase PdxT/SNO family. As to quaternary structure, in the presence of PdxS, forms a dodecamer of heterodimers. Only shows activity in the heterodimer.

The enzyme catalyses aldehydo-D-ribose 5-phosphate + D-glyceraldehyde 3-phosphate + L-glutamine = pyridoxal 5'-phosphate + L-glutamate + phosphate + 3 H2O + H(+). The catalysed reaction is L-glutamine + H2O = L-glutamate + NH4(+). It functions in the pathway cofactor biosynthesis; pyridoxal 5'-phosphate biosynthesis. Catalyzes the hydrolysis of glutamine to glutamate and ammonia as part of the biosynthesis of pyridoxal 5'-phosphate. The resulting ammonia molecule is channeled to the active site of PdxS. The sequence is that of Pyridoxal 5'-phosphate synthase subunit PdxT from Thermotoga sp. (strain RQ2).